The primary structure comprises 341 residues: DNA-directed RNA polymerase subunit alpha (341 aa).

Residues 1–233 (MVREEVPVST…DLFIPFLHAE (233 aa)) form an alpha N-terminal domain (alpha-NTD) region. Residues 266-341 (IILKRIFIDQ…LKNSNQFESR (76 aa)) are alpha C-terminal domain (alpha-CTD).

Belongs to the RNA polymerase alpha chain family. In plastids the minimal PEP RNA polymerase catalytic core is composed of four subunits: alpha, beta, beta', and beta''. When a (nuclear-encoded) sigma factor is associated with the core the holoenzyme is formed, which can initiate transcription.

Its subcellular location is the plastid. The protein localises to the chloroplast. It carries out the reaction RNA(n) + a ribonucleoside 5'-triphosphate = RNA(n+1) + diphosphate. Functionally, DNA-dependent RNA polymerase catalyzes the transcription of DNA into RNA using the four ribonucleoside triphosphates as substrates. The protein is DNA-directed RNA polymerase subunit alpha of Nymphaea alba (White water-lily).